A 318-amino-acid chain; its full sequence is tRNA U34 carboxymethyltransferase (318 aa).

Positions 88, 102, 107, 126, 192, 196, and 311 each coordinate carboxy-S-adenosyl-L-methionine.

It belongs to the class I-like SAM-binding methyltransferase superfamily. CmoB family. As to quaternary structure, homotetramer.

The catalysed reaction is carboxy-S-adenosyl-L-methionine + 5-hydroxyuridine(34) in tRNA = 5-carboxymethoxyuridine(34) in tRNA + S-adenosyl-L-homocysteine + H(+). Its function is as follows. Catalyzes carboxymethyl transfer from carboxy-S-adenosyl-L-methionine (Cx-SAM) to 5-hydroxyuridine (ho5U) to form 5-carboxymethoxyuridine (cmo5U) at position 34 in tRNAs. The sequence is that of tRNA U34 carboxymethyltransferase from Pseudomonas fluorescens (strain Pf0-1).